Consider the following 154-residue polypeptide: Transcriptional repressor NrdR (154 aa).

Residues 3 to 34 (CPFCGANDTKVIDSRLVAEGEQVRRRRECVAC) fold into a zinc finger. One can recognise an ATP-cone domain in the interval 49–139 (PRLIKQDGTR…VYRRFQDLDE (91 aa)).

This sequence belongs to the NrdR family. Requires Zn(2+) as cofactor.

Negatively regulates transcription of bacterial ribonucleotide reductase nrd genes and operons by binding to NrdR-boxes. The chain is Transcriptional repressor NrdR from Pseudomonas putida (strain ATCC 700007 / DSM 6899 / JCM 31910 / BCRC 17059 / LMG 24140 / F1).